The primary structure comprises 75 residues: MPITSKYTDEQVESILTEIGAVLDKHGATPELSLMIAGNIATNVLNQQVAASQRKLIAEKFAQALISSLQEPKTH.

This sequence belongs to the UPF0352 family.

The polypeptide is UPF0352 protein VV1166 (Vibrio vulnificus (strain YJ016)).